The primary structure comprises 251 residues: MVDQEKETTHFGFRTVAKEQKEGMVAEVFHSVAAKYDLMNDLMSFGVHRIWKRFTVDCSGVRRGQRVLDLAGGTGDLTAKFSRLVGEQGEVILADINESMLRMGREKLRDKGIVGNVSYVQANAEALPFPDNYFDCITISFGLRNVTEKEKALRSMFRVLKPGGRLLVLEFSKPLLEPLSKAYDAYSFHILPKIGELVAQDAESYRYLAESIRMHPDQETLKGMMADAGFENVTYSNLTGGIVALHRGFKF.

S-adenosyl-L-methionine-binding positions include Thr74, Asp95, 123 to 124, and Ser140; that span reads NA.

This sequence belongs to the class I-like SAM-binding methyltransferase superfamily. MenG/UbiE family.

The enzyme catalyses a 2-demethylmenaquinol + S-adenosyl-L-methionine = a menaquinol + S-adenosyl-L-homocysteine + H(+). It catalyses the reaction a 2-methoxy-6-(all-trans-polyprenyl)benzene-1,4-diol + S-adenosyl-L-methionine = a 5-methoxy-2-methyl-3-(all-trans-polyprenyl)benzene-1,4-diol + S-adenosyl-L-homocysteine + H(+). Its pathway is quinol/quinone metabolism; menaquinone biosynthesis; menaquinol from 1,4-dihydroxy-2-naphthoate: step 2/2. It functions in the pathway cofactor biosynthesis; ubiquinone biosynthesis. Functionally, methyltransferase required for the conversion of demethylmenaquinol (DMKH2) to menaquinol (MKH2) and the conversion of 2-polyprenyl-6-methoxy-1,4-benzoquinol (DDMQH2) to 2-polyprenyl-3-methyl-6-methoxy-1,4-benzoquinol (DMQH2). This chain is Ubiquinone/menaquinone biosynthesis C-methyltransferase UbiE, found in Yersinia pestis bv. Antiqua (strain Angola).